We begin with the raw amino-acid sequence, 336 residues long: HTH-type transcriptional repressor PurR (336 aa).

Residues 2-56 enclose the HTH lacI-type domain; it reads ATIKDVAKMAGVSTTTVSHVINKTRFVAKDTEEAVLSAIKQLNYSPSAVARSLKV. Positions 4–23 form a DNA-binding region, H-T-H motif; the sequence is IKDVAKMAGVSTTTVSHVIN. Residues 48-56 mediate DNA binding; it reads SAVARSLKV. Residues Y73, K188, T190, F219, and D273 each coordinate hypoxanthine.

In terms of assembly, homodimer.

Its pathway is purine metabolism; purine nucleotide biosynthesis [regulation]. Is the main repressor of the genes involved in the de novo synthesis of purine nucleotides, regulating purB, purC, purEK, purF, purHD, purL, purMN and guaBA expression. PurR is allosterically activated to bind its cognate DNA by binding the purine corepressors, hypoxanthine or guanine, thereby effecting transcription repression. The protein is HTH-type transcriptional repressor PurR of Haemophilus influenzae (strain PittGG).